A 189-amino-acid chain; its full sequence is Penicillin-binding protein activator LpoB (189 aa).

An N-terminal signal peptide occupies residues 1-16; it reads MRRILFVALSVMFLAG. Cys17 is lipidated: N-palmitoyl cysteine. Residue Cys17 is the site of S-diacylglycerol cysteine attachment. Positions 18 to 52 are disordered; that stretch reads PSLPPEQPEPPTPVVPVTPSEKPTPPSEKVPEPPK. Pro residues predominate over residues 19 to 45; it reads SLPPEQPEPPTPVVPVTPSEKPTPPSE.

The protein belongs to the LpoB family. In terms of assembly, interacts with PBP1b.

The protein localises to the cell outer membrane. Regulator of peptidoglycan synthesis that is essential for the function of penicillin-binding protein 1B (PBP1b). This chain is Penicillin-binding protein activator LpoB, found in Photorhabdus laumondii subsp. laumondii (strain DSM 15139 / CIP 105565 / TT01) (Photorhabdus luminescens subsp. laumondii).